The sequence spans 564 residues: Iron-sensing transcriptional repressor (564 aa).

The GATA-type 1 zinc finger occupies 12-36; the sequence is CSNCHKTTTSLWRRGPDNSLLCNAC. Residues 100-170 form a disordered region; it reads ASKSQSGRKS…SSPPHEPSVT (71 aa). Ser-109 carries the phosphoserine modification. Low complexity predominate over residues 109–120; the sequence is SLSPNPSSVPSS. Residues 135 to 148 show a composition bias toward polar residues; sequence QIVSDTTTETSNGT. The GATA-type 2 zinc finger occupies 172-196; that stretch reads CQNCATTNTPLWRRDESGNPICNAC. Disordered regions lie at residues 226 to 285, 381 to 409, and 443 to 496; these read GNAN…NTGV, DSSKQLSESTTSNTDNNGVATANQSNPLG, and LLNP…VQGS. Polar residues-rich tracts occupy residues 240-253, 260-271, 381-407, and 450-486; these read SGDSGSSVKQQSTR, SFPNGNGHASGN, DSSKQLSESTTSNTDNNGVATANQSNP, and PSNSDKQPSMSNGPKSEVSPSQSQQAPLIQSSTSPVS.

Interacts with tup11.

It localises to the nucleus. Its activity is regulated as follows. Activated by iron. Transcriptional repressor that binds the consensus promoter sequence 5'-[AT]GATAA-3' during iron-replete conditions to down-regulate transcription of target genes. Represses the expression of the iron transporter fio1 in response to high iron concentrations. Also represses the expression of str1, str2 and str3. Represses the expression of shu1 in presence of iron. In Schizosaccharomyces pombe (strain 972 / ATCC 24843) (Fission yeast), this protein is Iron-sensing transcriptional repressor.